We begin with the raw amino-acid sequence, 193 residues long: MRVFGVDPGLTRCGFGVVDVAANRSASLVAVGVIGSSSELPLSQRLLVISESIDQWLDTHSPDVLAVERVFSQTNLSTVMGVAQASGIVIAAAAKRGIAVALHTPSEVKAAVTGNGRADKIAVTAMVTRILKLKVAPTPADAADALALAITHAWRSGPGSTAAAGELTPARKLWLEAEAKARKNVEKSSKQRR.

Catalysis depends on residues Asp-7, Glu-68, and Asp-141. Mg(2+) contacts are provided by Asp-7, Glu-68, and Asp-141.

Belongs to the RuvC family. In terms of assembly, homodimer which binds Holliday junction (HJ) DNA. The HJ becomes 2-fold symmetrical on binding to RuvC with unstacked arms; it has a different conformation from HJ DNA in complex with RuvA. In the full resolvosome a probable DNA-RuvA(4)-RuvB(12)-RuvC(2) complex forms which resolves the HJ. The cofactor is Mg(2+).

It localises to the cytoplasm. It carries out the reaction Endonucleolytic cleavage at a junction such as a reciprocal single-stranded crossover between two homologous DNA duplexes (Holliday junction).. Its function is as follows. The RuvA-RuvB-RuvC complex processes Holliday junction (HJ) DNA during genetic recombination and DNA repair. Endonuclease that resolves HJ intermediates. Cleaves cruciform DNA by making single-stranded nicks across the HJ at symmetrical positions within the homologous arms, yielding a 5'-phosphate and a 3'-hydroxyl group; requires a central core of homology in the junction. The consensus cleavage sequence is 5'-(A/T)TT(C/G)-3'. Cleavage occurs on the 3'-side of the TT dinucleotide at the point of strand exchange. HJ branch migration catalyzed by RuvA-RuvB allows RuvC to scan DNA until it finds its consensus sequence, where it cleaves and resolves the cruciform DNA. This Renibacterium salmoninarum (strain ATCC 33209 / DSM 20767 / JCM 11484 / NBRC 15589 / NCIMB 2235) protein is Crossover junction endodeoxyribonuclease RuvC.